Reading from the N-terminus, the 73-residue chain is Large ribosomal subunit protein bL31 (73 aa).

Zn(2+) contacts are provided by Cys16, Cys18, Cys36, and Cys39.

It belongs to the bacterial ribosomal protein bL31 family. Type A subfamily. Part of the 50S ribosomal subunit. Zn(2+) is required as a cofactor.

Functionally, binds the 23S rRNA. In Desulfotalea psychrophila (strain LSv54 / DSM 12343), this protein is Large ribosomal subunit protein bL31.